The following is a 161-amino-acid chain: MAKKNSKTKNNDNTIARNKRASHDYHLEERFEAGLELQGWEVKSLRAGKANIADSYIFLKNGEAWLLGATFPPLLVASSHVVCDPMRYRKLLLNRRELDNLVGKVERQGYSIIPISLYWKHAWVKISFALAKGKQEHDKRADVKDREWKVDKERMMKHSVR.

It belongs to the SmpB family.

It is found in the cytoplasm. Its function is as follows. Required for rescue of stalled ribosomes mediated by trans-translation. Binds to transfer-messenger RNA (tmRNA), required for stable association of tmRNA with ribosomes. tmRNA and SmpB together mimic tRNA shape, replacing the anticodon stem-loop with SmpB. tmRNA is encoded by the ssrA gene; the 2 termini fold to resemble tRNA(Ala) and it encodes a 'tag peptide', a short internal open reading frame. During trans-translation Ala-aminoacylated tmRNA acts like a tRNA, entering the A-site of stalled ribosomes, displacing the stalled mRNA. The ribosome then switches to translate the ORF on the tmRNA; the nascent peptide is terminated with the 'tag peptide' encoded by the tmRNA and targeted for degradation. The ribosome is freed to recommence translation, which seems to be the essential function of trans-translation. The protein is SsrA-binding protein of Psychromonas ingrahamii (strain DSM 17664 / CCUG 51855 / 37).